We begin with the raw amino-acid sequence, 367 residues long: Dual specificity protein phosphatase 1 (367 aa).

Residues Gly-20–Ser-137 form the Rhodanese domain. In terms of domain architecture, Tyrosine-protein phosphatase spans Gly-173 to Ala-314. Cys-258 acts as the Phosphocysteine intermediate in catalysis. Phosphoserine; by MAPK1 and MAPK3 is present on residues Ser-359 and Ser-364.

It belongs to the protein-tyrosine phosphatase family. Non-receptor class dual specificity subfamily. In terms of processing, phosphorylation at Ser-359 and Ser-364 by MAPK1/ERK2 and MAPK3/ERK1 reduces its rate of degradation. 'Lys-48'-linked polyubiquitinated by NEURL3, leading to proteasomal degradation.

It localises to the nucleus. The catalysed reaction is O-phospho-L-tyrosyl-[protein] + H2O = L-tyrosyl-[protein] + phosphate. The enzyme catalyses O-phospho-L-seryl-[protein] + H2O = L-seryl-[protein] + phosphate. It carries out the reaction O-phospho-L-threonyl-[protein] + H2O = L-threonyl-[protein] + phosphate. Its function is as follows. Dual specificity phosphatase that dephosphorylates MAP kinase MAPK1/ERK2 on both 'Thr-183' and 'Tyr-185', regulating its activity during the meiotic cell cycle. The chain is Dual specificity protein phosphatase 1 from Mus musculus (Mouse).